The chain runs to 222 residues: Probable nicotinate-nucleotide adenylyltransferase (222 aa).

It belongs to the NadD family.

The enzyme catalyses nicotinate beta-D-ribonucleotide + ATP + H(+) = deamido-NAD(+) + diphosphate. It participates in cofactor biosynthesis; NAD(+) biosynthesis; deamido-NAD(+) from nicotinate D-ribonucleotide: step 1/1. Functionally, catalyzes the reversible adenylation of nicotinate mononucleotide (NaMN) to nicotinic acid adenine dinucleotide (NaAD). In Xylella fastidiosa (strain M12), this protein is Probable nicotinate-nucleotide adenylyltransferase.